A 219-amino-acid polypeptide reads, in one-letter code: Imidazole glycerol phosphate synthase subunit HisH (219 aa).

Positions 4–216 (TVTVLDYGSG…VDSLPATGRN (213 aa)) constitute a Glutamine amidotransferase type-1 domain. The active-site Nucleophile is the C82. Residues H191 and E193 contribute to the active site.

In terms of assembly, heterodimer of HisH and HisF.

It is found in the cytoplasm. It catalyses the reaction 5-[(5-phospho-1-deoxy-D-ribulos-1-ylimino)methylamino]-1-(5-phospho-beta-D-ribosyl)imidazole-4-carboxamide + L-glutamine = D-erythro-1-(imidazol-4-yl)glycerol 3-phosphate + 5-amino-1-(5-phospho-beta-D-ribosyl)imidazole-4-carboxamide + L-glutamate + H(+). It carries out the reaction L-glutamine + H2O = L-glutamate + NH4(+). Its pathway is amino-acid biosynthesis; L-histidine biosynthesis; L-histidine from 5-phospho-alpha-D-ribose 1-diphosphate: step 5/9. IGPS catalyzes the conversion of PRFAR and glutamine to IGP, AICAR and glutamate. The HisH subunit catalyzes the hydrolysis of glutamine to glutamate and ammonia as part of the synthesis of IGP and AICAR. The resulting ammonia molecule is channeled to the active site of HisF. This is Imidazole glycerol phosphate synthase subunit HisH from Renibacterium salmoninarum (strain ATCC 33209 / DSM 20767 / JCM 11484 / NBRC 15589 / NCIMB 2235).